The sequence spans 367 residues: Protein-glutamate methylesterase/protein-glutamine glutaminase 1 (367 aa).

The Response regulatory domain occupies 9-126 (KVLCVDDSAL…RDGMLDYSEK (118 aa)). Aspartate 60 carries the 4-aspartylphosphate modification. In terms of domain architecture, CheB-type methylesterase spans 168–360 (LVSTEKLIIV…RRIMARLASM (193 aa)). Catalysis depends on residues serine 180, histidine 206, and aspartate 302.

This sequence belongs to the CheB family. Phosphorylated by CheA. Phosphorylation of the N-terminal regulatory domain activates the methylesterase activity.

Its subcellular location is the cytoplasm. It catalyses the reaction [protein]-L-glutamate 5-O-methyl ester + H2O = L-glutamyl-[protein] + methanol + H(+). It carries out the reaction L-glutaminyl-[protein] + H2O = L-glutamyl-[protein] + NH4(+). Functionally, involved in chemotaxis. Part of a chemotaxis signal transduction system that modulates chemotaxis in response to various stimuli. Catalyzes the demethylation of specific methylglutamate residues introduced into the chemoreceptors (methyl-accepting chemotaxis proteins or MCP) by CheR. Also mediates the irreversible deamidation of specific glutamine residues to glutamic acid. The chain is Protein-glutamate methylesterase/protein-glutamine glutaminase 1 from Burkholderia pseudomallei (strain K96243).